The sequence spans 98 residues: Protein translation factor SUI1 homolog (98 aa).

This sequence belongs to the SUI1 family.

This Thermococcus kodakarensis (strain ATCC BAA-918 / JCM 12380 / KOD1) (Pyrococcus kodakaraensis (strain KOD1)) protein is Protein translation factor SUI1 homolog.